Reading from the N-terminus, the 180-residue chain is Cytokinin-beta-glucosidase 2 (180 aa).

Functionally, hydrolyzes cytokinin glucosides thus liberating free cytokinins. This is Cytokinin-beta-glucosidase 2 (ROLC2) from Linaria vulgaris (Toadflax).